The primary structure comprises 465 residues: Pancreatic triacylglycerol lipase (465 aa).

The first 16 residues, 1 to 16 (MLMLWTFAVLLGAVAG), serve as a signal peptide directing secretion. 2 disulfide bridges follow: Cys-20–Cys-26 and Cys-107–Cys-118. Ser-169 functions as the Nucleophile in the catalytic mechanism. Asp-193 acts as the Charge relay system in catalysis. Residues Glu-204, Arg-207, Asp-209, and Asp-212 each contribute to the Ca(2+) site. An intrachain disulfide couples Cys-254 to Cys-278. His-280 functions as the Charge relay system in the catalytic mechanism. 3 disulfide bridges follow: Cys-302–Cys-313, Cys-316–Cys-321, and Cys-449–Cys-465. One can recognise a PLAT domain in the interval 355-465 (WRYQVTVTLS…EDVLLTLSPC (111 aa)).

It belongs to the AB hydrolase superfamily. Lipase family. As to quaternary structure, forms a 1:1 stoichiometric complex with (pro)colipase/CLPS. Pancreas.

It is found in the secreted. It carries out the reaction a triacylglycerol + H2O = a diacylglycerol + a fatty acid + H(+). It catalyses the reaction 1,2,3-tri-(9Z-octadecenoyl)-glycerol + H2O = di-(9Z)-octadecenoylglycerol + (9Z)-octadecenoate + H(+). The enzyme catalyses 1,2,3-tributanoylglycerol + H2O = dibutanoylglycerol + butanoate + H(+). The catalysed reaction is all-trans-retinyl hexadecanoate + H2O = all-trans-retinol + hexadecanoate + H(+). It carries out the reaction 1,2-di-(9Z-octadecenoyl)-glycerol + H2O = (9Z-octadecenoyl)-glycerol + (9Z)-octadecenoate + H(+). With respect to regulation, inhibited by bile salts, is reactivated by (pro)colipase/CLPS. In terms of biological role, plays an important role in fat metabolism. It preferentially splits the esters of long-chain fatty acids at positions 1 and 3, producing mainly 2-monoacylglycerol and free fatty acids, and shows considerably higher activity against insoluble emulsified substrates than against soluble ones. The chain is Pancreatic triacylglycerol lipase from Mus musculus (Mouse).